The sequence spans 473 residues: 3-isopropylmalate dehydratase large subunit (473 aa).

[4Fe-4S] cluster-binding residues include Cys-354, Cys-414, and Cys-417.

The protein belongs to the aconitase/IPM isomerase family. LeuC type 1 subfamily. As to quaternary structure, heterodimer of LeuC and LeuD. [4Fe-4S] cluster is required as a cofactor.

The enzyme catalyses (2R,3S)-3-isopropylmalate = (2S)-2-isopropylmalate. The protein operates within amino-acid biosynthesis; L-leucine biosynthesis; L-leucine from 3-methyl-2-oxobutanoate: step 2/4. In terms of biological role, catalyzes the isomerization between 2-isopropylmalate and 3-isopropylmalate, via the formation of 2-isopropylmaleate. In Mycobacterium bovis (strain ATCC BAA-935 / AF2122/97), this protein is 3-isopropylmalate dehydratase large subunit.